The following is a 259-amino-acid chain: Global transcriptional regulator CodY (259 aa).

A GAF domain region spans residues 1-155 (MNLLEKTRQL…SATVVGMEIL (155 aa)). The segment at residues 203 to 222 (ASKIADRVGITRSVIVNALR) is a DNA-binding region (H-T-H motif).

Belongs to the CodY family.

It is found in the cytoplasm. Its function is as follows. DNA-binding global transcriptional regulator which is involved in the adaptive response to starvation and acts by directly or indirectly controlling the expression of numerous genes in response to nutrient availability. During rapid exponential growth, CodY is highly active and represses genes whose products allow adaptation to nutrient depletion. The chain is Global transcriptional regulator CodY from Exiguobacterium sp. (strain ATCC BAA-1283 / AT1b).